Here is a 328-residue protein sequence, read N- to C-terminus: Tyrosine--tRNA ligase (328 aa).

Residue tyrosine 33 coordinates L-tyrosine. The 'HIGH' region motif lies at 38 to 46; sequence PSGVLHIGH. L-tyrosine-binding residues include tyrosine 154, glutamine 158, aspartate 161, and glutamine 176. The tract at residues 193–227 is disordered; sequence EPPTSLHTPLIADLGTGRGKMSSSEGVTISMEDSR. Residues 212 to 216 carry the 'KMSKS' region motif; that stretch reads KMSSS. Serine 215 contacts ATP.

Belongs to the class-I aminoacyl-tRNA synthetase family. TyrS type 3 subfamily. In terms of assembly, homodimer.

Its subcellular location is the cytoplasm. It catalyses the reaction tRNA(Tyr) + L-tyrosine + ATP = L-tyrosyl-tRNA(Tyr) + AMP + diphosphate + H(+). Catalyzes the attachment of tyrosine to tRNA(Tyr) in a two-step reaction: tyrosine is first activated by ATP to form Tyr-AMP and then transferred to the acceptor end of tRNA(Tyr). The chain is Tyrosine--tRNA ligase from Halorubrum lacusprofundi (strain ATCC 49239 / DSM 5036 / JCM 8891 / ACAM 34).